Here is a 349-residue protein sequence, read N- to C-terminus: Magnesium-protoporphyrin IX monomethyl ester [oxidative] cyclase (349 aa).

It belongs to the AcsF family. Fe cation is required as a cofactor.

It localises to the plastid. It is found in the chloroplast. The catalysed reaction is Mg-protoporphyrin IX 13-monomethyl ester + 3 NADPH + 3 O2 + 2 H(+) = 3,8-divinyl protochlorophyllide a + 3 NADP(+) + 5 H2O. Its pathway is porphyrin-containing compound metabolism; chlorophyll biosynthesis (light-independent). Its function is as follows. Catalyzes the formation of the isocyclic ring in chlorophyll biosynthesis. Mediates the cyclase reaction, which results in the formation of divinylprotochlorophyllide (Pchlide) characteristic of all chlorophylls from magnesium-protoporphyrin IX 13-monomethyl ester (MgPMME). The protein is Magnesium-protoporphyrin IX monomethyl ester [oxidative] cyclase of Pyropia yezoensis (Susabi-nori).